The following is a 290-amino-acid chain: MFKQDQLHRFLFKNYSVRGELVLASETYQHILENHDYPQPVQQLLGELLVATSLLTATLKFDGDITVQIQGDGPVKLAVINGNHQQQMRGVARIDGLVAENSSLKQMVGTGYMVITITPTHGERYQGVVALEGETLADCLDDYFRQSEQLPTRLFIRTGIQDGRVAAGGMLLQILPTAEQGSAEAFDHLVQLTATIKGEELFSLEVKEILHRLYHEEDVILYEPQAVEFRCTCSRQRCADTLVTLSDEDVNHILQKDGNIDMACEYCGTHYIFDADDLAAIRIEKKNRLH.

Intrachain disulfides connect Cys231/Cys233 and Cys264/Cys267.

It belongs to the HSP33 family. Under oxidizing conditions two disulfide bonds are formed involving the reactive cysteines. Under reducing conditions zinc is bound to the reactive cysteines and the protein is inactive.

The protein resides in the cytoplasm. Redox regulated molecular chaperone. Protects both thermally unfolding and oxidatively damaged proteins from irreversible aggregation. Plays an important role in the bacterial defense system toward oxidative stress. This Photorhabdus laumondii subsp. laumondii (strain DSM 15139 / CIP 105565 / TT01) (Photorhabdus luminescens subsp. laumondii) protein is 33 kDa chaperonin.